A 322-amino-acid chain; its full sequence is Phosphatidylglycerol--prolipoprotein diacylglyceryl transferase (322 aa).

A run of 4 helical transmembrane segments spans residues 21-41, 50-70, 98-118, and 123-143; these read PLPI…AIWL, GGNP…GIIG, NGGL…WAYF, and IPLA…QAIG. R144 contributes to the a 1,2-diacyl-sn-glycero-3-phospho-(1'-sn-glycerol) binding site. A run of 2 helical transmembrane segments spans residues 191-211 and 254-274; these read VHPT…LLIW and INTL…LRLG. The disordered stretch occupies residues 283–322; that stretch reads VDPAYHAAQAERDDTETAGLDATTGTVPGDSPETTGKKRK.

It belongs to the Lgt family.

Its subcellular location is the cell membrane. The enzyme catalyses L-cysteinyl-[prolipoprotein] + a 1,2-diacyl-sn-glycero-3-phospho-(1'-sn-glycerol) = an S-1,2-diacyl-sn-glyceryl-L-cysteinyl-[prolipoprotein] + sn-glycerol 1-phosphate + H(+). Its pathway is protein modification; lipoprotein biosynthesis (diacylglyceryl transfer). Functionally, catalyzes the transfer of the diacylglyceryl group from phosphatidylglycerol to the sulfhydryl group of the N-terminal cysteine of a prolipoprotein, the first step in the formation of mature lipoproteins. The sequence is that of Phosphatidylglycerol--prolipoprotein diacylglyceryl transferase from Corynebacterium efficiens (strain DSM 44549 / YS-314 / AJ 12310 / JCM 11189 / NBRC 100395).